A 1706-amino-acid polypeptide reads, in one-letter code: Cadherin-99C (1706 aa).

The signal sequence occupies residues 1–28 (MAARNSLTPQQGLGFFGLLILLCSAVLG). At 29–1395 (KSQMCEVETG…AIDNEVFPFT (1367 aa)) the chain is on the extracellular side. Cadherin domains are found at residues 68-142 (DPDT…APRF), 143-264 (MNTP…DPSF), 277-387 (INPE…PPVI), 388-500 (SSSQ…APKL), 519-604 (VTQV…PPRF), 605-704 (QKPI…NPEF), 707-807 (STLP…VPKF), 808-908 (SDAR…PPRF), 909-1005 (ITVP…RVDV), 1038-1148 (SDDS…APEF), and 1156-1270 (QQDT…ALSF). N-linked (GlcNAc...) asparagine glycosylation is found at asparagine 105 and asparagine 188. 4 N-linked (GlcNAc...) asparagine glycosylation sites follow: asparagine 442, asparagine 553, asparagine 620, and asparagine 753. Asparagine 1053, asparagine 1088, and asparagine 1108 each carry an N-linked (GlcNAc...) asparagine glycan. Asparagine 1311 and asparagine 1367 each carry an N-linked (GlcNAc...) asparagine glycan. A helical transmembrane segment spans residues 1396–1416 (LIAISLVILILGTIGIIYICI). Residues 1417 to 1706 (SWSKYKNFKQ…RSEVETTTEL (290 aa)) are Cytoplasmic-facing.

As to quaternary structure, interacts (via the cytoplasmic domain) with ck. Interacts (via the cytoplasmic domain) with Cul1 and Ubr3.

It is found in the apical cell membrane. It localises to the endosome membrane. The protein localises to the cell projection. The protein resides in the microvillus membrane. In terms of biological role, cadherin that functions in epithelial morphogenesis and the intestine epithelial immune response. Essential for female fertility. Regulates the length and organization of apical microvilli in developing follicle cells and salivary glands. Function in the follicle cell is essential for egg development as the microvilli secrete eggshell material such as the vitelline membrane. Acts at least in part by regulating the recruitment of the myosin ck to the follicle cell microvilli. Also required to regulate cell rearrangements during salivary tube elongation, possibly by modulating cellular adhesion between the apical surface and apical extracellular matrix during epithelial tube elongation. May also function in cellular adhesion during the development of other tubular epithelia such as the trachea. Possibly functions as an apical membrane determinant which acts in apical membrane expansion during salivary and tracheal epithelial tube elongation. In salivary gland development, this function is independent of the other apical membrane determinants crb and sas. Essential downstream component of a hh-signaling pathway which regulates the Duox-dependent gut epithelial immune response to bacterial uracil; required for endosome formation in the enterocyte and activating norpA-dependent Ca2+ mobilization, which are essential steps in the Duox-dependent production of reactive oxygen species (ROS) in response to intestinal bacterial infection. In Drosophila melanogaster (Fruit fly), this protein is Cadherin-99C.